Here is a 291-residue protein sequence, read N- to C-terminus: Ribosomal RNA small subunit methyltransferase A (291 aa).

6 residues coordinate S-adenosyl-L-methionine: N27, L29, G54, E75, D100, and N125.

This sequence belongs to the class I-like SAM-binding methyltransferase superfamily. rRNA adenine N(6)-methyltransferase family. RsmA subfamily.

The protein resides in the cytoplasm. It carries out the reaction adenosine(1518)/adenosine(1519) in 16S rRNA + 4 S-adenosyl-L-methionine = N(6)-dimethyladenosine(1518)/N(6)-dimethyladenosine(1519) in 16S rRNA + 4 S-adenosyl-L-homocysteine + 4 H(+). Functionally, specifically dimethylates two adjacent adenosines (A1518 and A1519) in the loop of a conserved hairpin near the 3'-end of 16S rRNA in the 30S particle. May play a critical role in biogenesis of 30S subunits. This Streptococcus mutans serotype c (strain ATCC 700610 / UA159) protein is Ribosomal RNA small subunit methyltransferase A.